The primary structure comprises 522 residues: Protein nucleotidyltransferase YdiU (522 aa).

Positions 109, 111, 112, 132, 144, 145, 195, and 202 each coordinate ATP. Asp271 acts as the Proton acceptor in catalysis. Asn272 and Asp281 together coordinate Mg(2+). Asp281 serves as a coordination point for ATP.

Belongs to the SELO family. Mg(2+) serves as cofactor. Mn(2+) is required as a cofactor.

The enzyme catalyses L-seryl-[protein] + ATP = 3-O-(5'-adenylyl)-L-seryl-[protein] + diphosphate. It carries out the reaction L-threonyl-[protein] + ATP = 3-O-(5'-adenylyl)-L-threonyl-[protein] + diphosphate. It catalyses the reaction L-tyrosyl-[protein] + ATP = O-(5'-adenylyl)-L-tyrosyl-[protein] + diphosphate. The catalysed reaction is L-histidyl-[protein] + UTP = N(tele)-(5'-uridylyl)-L-histidyl-[protein] + diphosphate. The enzyme catalyses L-seryl-[protein] + UTP = O-(5'-uridylyl)-L-seryl-[protein] + diphosphate. It carries out the reaction L-tyrosyl-[protein] + UTP = O-(5'-uridylyl)-L-tyrosyl-[protein] + diphosphate. Nucleotidyltransferase involved in the post-translational modification of proteins. It can catalyze the addition of adenosine monophosphate (AMP) or uridine monophosphate (UMP) to a protein, resulting in modifications known as AMPylation and UMPylation. The polypeptide is Protein nucleotidyltransferase YdiU (Burkholderia cenocepacia (strain HI2424)).